A 114-amino-acid polypeptide reads, in one-letter code: Ribonuclease P protein component (114 aa).

This sequence belongs to the RnpA family. Consists of a catalytic RNA component (M1 or rnpB) and a protein subunit.

It catalyses the reaction Endonucleolytic cleavage of RNA, removing 5'-extranucleotides from tRNA precursor.. Functionally, RNaseP catalyzes the removal of the 5'-leader sequence from pre-tRNA to produce the mature 5'-terminus. It can also cleave other RNA substrates such as 4.5S RNA. The protein component plays an auxiliary but essential role in vivo by binding to the 5'-leader sequence and broadening the substrate specificity of the ribozyme. This Borrelia turicatae (strain 91E135) protein is Ribonuclease P protein component.